The following is a 339-amino-acid chain: Cathepsin B (339 aa).

A signal peptide spans 1 to 17; the sequence is MWWLWASLCCLLALGDA. The propeptide at 18–79 is activation peptide; that stretch reads RSRPSFHPLS…QRVMFTEDLK (62 aa). 6 cysteine pairs are disulfide-bonded: C93–C122, C105–C150, C141–C207, C142–C146, C179–C211, and C187–C198. C108 is an active-site residue. The N-linked (GlcNAc...) asparagine glycan is linked to N192. An N6-acetyllysine modification is found at K220. Residues H278 and N298 contribute to the active site. The propeptide occupies 334–339; that stretch reads QYWEKI.

This sequence belongs to the peptidase C1 family. As to quaternary structure, dimer of a heavy chain and a light chain cross-linked by a disulfide bond. Interacts with SRPX2. Directly interacts with SHKBP1.

The protein localises to the lysosome. It is found in the melanosome. The protein resides in the secreted. It localises to the extracellular space. Its subcellular location is the apical cell membrane. The enzyme catalyses Hydrolysis of proteins with broad specificity for peptide bonds. Preferentially cleaves -Arg-Arg-|-Xaa bonds in small molecule substrates (thus differing from cathepsin L). In addition to being an endopeptidase, shows peptidyl-dipeptidase activity, liberating C-terminal dipeptides.. In terms of biological role, thiol protease which is believed to participate in intracellular degradation and turnover of proteins. Cleaves matrix extracellular phosphoglycoprotein MEPE. Involved in the solubilization of cross-linked TG/thyroglobulin in the thyroid follicle lumen. Has also been implicated in tumor invasion and metastasis. This is Cathepsin B (CTSB) from Macaca fascicularis (Crab-eating macaque).